The sequence spans 419 residues: UDP-N-acetylglucosamine 1-carboxyvinyltransferase 2 (419 aa).

Position 24 to 25 (24 to 25) interacts with phosphoenolpyruvate; it reads KN. Residue Arg94 participates in UDP-N-acetyl-alpha-D-glucosamine binding. Catalysis depends on Cys118, which acts as the Proton donor. A 2-(S-cysteinyl)pyruvic acid O-phosphothioketal modification is found at Cys118. UDP-N-acetyl-alpha-D-glucosamine is bound by residues 123–127, Asp307, and Ile329; that span reads RPIDQ.

Belongs to the EPSP synthase family. MurA subfamily.

The protein resides in the cytoplasm. It carries out the reaction phosphoenolpyruvate + UDP-N-acetyl-alpha-D-glucosamine = UDP-N-acetyl-3-O-(1-carboxyvinyl)-alpha-D-glucosamine + phosphate. It functions in the pathway cell wall biogenesis; peptidoglycan biosynthesis. In terms of biological role, cell wall formation. Adds enolpyruvyl to UDP-N-acetylglucosamine. The sequence is that of UDP-N-acetylglucosamine 1-carboxyvinyltransferase 2 from Staphylococcus aureus (strain bovine RF122 / ET3-1).